Reading from the N-terminus, the 494-residue chain is MRQNLKKVAQIKVDESKKLFPYVFRVKTSCGNCAKRSKPKLIYLLIFSLISSCFVFAPQLLCFPYPSALFLIDSSIKEIENRVSESNIESPKTSQKEESISCDRTGYRSDICFMKGDIRTHSPSSSIFLYTSNDLTTDQVLQEKIKPYTRKWETSIMETIPELKLVTKDMKLFGDKRKCEVIHEVPAVLFSTGGYTGNLYHEFNDGLIPLYITSKRFNKKVVFVIAEYHKWWEMKYGDVLSQLSDYSLIDFNKDKRTHCFKEAIVGLRIHGELTVDPSQMQDDGTTINEFRNVLDRAYRPRINRLDRLEEQRFHARLAQRRKAKRPKLALFSRTGSRGITNEDLMVKMAQRIGFDIEVLRPDRTTELAKIYRVLNSSKVMVGVHGAAMTHFLFMKPGSIFIQIIPLGTDWAAETYYGEPAKKLGLDYNGYKILPRESSLYEKYDKDDPILKDPNSITKKGWQFTKGIYLNDQKVRLDLHRFKKLLIDAYAKSIR.

The Cytoplasmic segment spans residues 1 to 40; sequence MRQNLKKVAQIKVDESKKLFPYVFRVKTSCGNCAKRSKPK. The chain crosses the membrane as a helical; Signal-anchor for type II membrane protein span at residues 41–61; the sequence is LIYLLIFSLISSCFVFAPQLL. Over 62–494 the chain is Lumenal; that stretch reads CFPYPSALFL…LIDAYAKSIR (433 aa). Residue asparagine 375 is glycosylated (N-linked (GlcNAc...) asparagine).

It belongs to the glycosyltransferase 61 family.

It localises to the golgi apparatus membrane. Glycosyletransferase required for the proper composition and structural properties of released seed coat mucilage. Required for the production of highly branched xylan polymers in seed coat mucilage. Facilitates the addition of xylose residues directly to the xylan backbone. Xylan with xylose side chains seems to be necessary for pectin attachment to the seed surface. Essential for xylan synthesis in seed coat epidermal (SCE) cells. The polypeptide is Xylan glycosyltransferase MUCI21 (Arabidopsis thaliana (Mouse-ear cress)).